An 83-amino-acid chain; its full sequence is Subtilisin-chymotrypsin inhibitor CI-1A (83 aa).

The segment at 1-24 is disordered; it reads MSSMEGSVLKYPEPTEGSIGASSA.

This sequence belongs to the protease inhibitor I13 (potato type I serine protease inhibitor) family.

In terms of biological role, inhibits both subtilisin and chymotrypsin. This Hordeum vulgare (Barley) protein is Subtilisin-chymotrypsin inhibitor CI-1A.